Consider the following 1262-residue polypeptide: Isoleucine--tRNA ligase, cytoplasmic (1262 aa).

The residue at position 1 (methionine 1) is an N-acetylmethionine. Residues 48–58 carry the 'HIGH' region motif; it reads PFATGLPHYGH. The 'KMSKS' region motif lies at 600–604; the sequence is KMSKR. Position 603 (lysine 603) interacts with ATP. Residues serine 1047 and serine 1049 each carry the phosphoserine modification. Position 1058 is a phosphothreonine (threonine 1058).

The protein belongs to the class-I aminoacyl-tRNA synthetase family. In terms of assembly, part of a multisubunit complex that groups tRNA ligases for Arg (RARS1), Asp (DARS1), Gln (QARS1), Ile (IARS1), Leu (LARS1), Lys (KARS1), Met (MARS1) the bifunctional ligase for Glu and Pro (EPRS1) and the auxiliary subunits AIMP1/p43, AIMP2/p38 and EEF1E1/p18. Expressed in liver and muscle (at protein level).

It localises to the cytoplasm. The protein localises to the cytosol. It catalyses the reaction tRNA(Ile) + L-isoleucine + ATP = L-isoleucyl-tRNA(Ile) + AMP + diphosphate. Its function is as follows. Catalyzes the specific attachment of an amino acid to its cognate tRNA in a 2 step reaction: the amino acid (AA) is first activated by ATP to form AA-AMP and then transferred to the acceptor end of the tRNA. The sequence is that of Isoleucine--tRNA ligase, cytoplasmic from Homo sapiens (Human).